Consider the following 88-residue polypeptide: Small ribosomal subunit protein uS15 (88 aa).

Belongs to the universal ribosomal protein uS15 family. In terms of assembly, part of the 30S ribosomal subunit. Forms a bridge to the 50S subunit in the 70S ribosome, contacting the 23S rRNA.

Its function is as follows. One of the primary rRNA binding proteins, it binds directly to 16S rRNA where it helps nucleate assembly of the platform of the 30S subunit by binding and bridging several RNA helices of the 16S rRNA. Functionally, forms an intersubunit bridge (bridge B4) with the 23S rRNA of the 50S subunit in the ribosome. The chain is Small ribosomal subunit protein uS15 from Opitutus terrae (strain DSM 11246 / JCM 15787 / PB90-1).